The chain runs to 1077 residues: Receptor-like protein 1 (1077 aa).

Residues 1–38 (MRTDERRRWWVKPKKHITLVFITITMIIQFQMKGCVSC) form the signal peptide. The tract at residues 39-120 (VETERMGLLQ…SQTRSLNLSL (82 aa)) is N-cap. Residues 39-1024 (VETERMGLLQ…NEEEGNVIDM (986 aa)) are Extracellular-facing. Residues N117, N131, and N139 are each glycosylated (N-linked (GlcNAc...) asparagine). LRR repeat units lie at residues 124–147 (FPQLQSLNLSWNWFTNLSDHFLGF), 153–176 (LDKLTTLDFSHNMFDNSIVPFLNA), 177–201 (ATSIRSLHLESNYMEGVFPPQELSN), 202–225 (MTNLRVLNLKDNSFSFLSSQGLTD), 227–250 (RDLEVLDLSFNGVNDSEASHSLST), 251–274 (AKLKTLDLNFNPLSDFSQLKGLES), 275–299 (LQELQVLKLRGNKFNHTLSTHVLKD), 300–324 (LKMLQELDLSDNGFTNLDHGRGLEI), 326–348 (TSLQVLDFKRNQLSLTHEGYLGI), 351–376 (LMKLRELDLSSNALTSLPYCLGNLTH), 378–397 (RTLDLSNNQLNGNLSSFVSG), and 399–424 (PSVLEYLSLLDNNFDGSFLFNSLVNQ). N201 carries an N-linked (GlcNAc...) asparagine glycan. N240 carries N-linked (GlcNAc...) asparagine glycosylation. N289 carries N-linked (GlcNAc...) asparagine glycosylation. Residues N373, N390, and N423 are each glycosylated (N-linked (GlcNAc...) asparagine). Residues 425–449 (TRLTVFKLSSKVGVIQVQTESSWAP) form an LRR 13; degenerate repeat. LRR repeat units follow at residues 450–473 (LFQLKMLYLSNCSLGSTMLGFLVH), 474–498 (QRDLCFVDLSHNKLTGTFPTWLVKN), 499–522 (NTRLQTILLSGNSLTKLQLPILVH), 524–545 (LQVLDISSNMIYDSIQEDIGMV), 546–570 (FPNLRFMNFSSNHFQGTIPSSIGEM), 572–594 (SLQVLDMSSNGLYGQLPIMFLSG), 595–621 (CYSLRVLKLSNNQLQGKIFSKHANLTG), 623–643 (VGLFLDGNNFTGSLEEGLLKS), 644–666 (KNLTLLDISDNRFSGMLPLWIGR), 667–694 (ISRLSYLYMSGNQLKGPFPFLRQSPWVE), 696–713 (MDISHNSFSGSIPRNVNF), 714–737 (PSLRELRLQNNEFTGLVPGNLFKA), 739–761 (GLEVLDLRNNNFSGKILNTIDQT), 762–785 (SKLRILLLRNNSFQTYIPGKICQL), 786–808 (SEVGLLDLSHNQFRGPIPSCFSK), 877–901 (LRYMHGLDLSSNELSGEIPIEIGDL), 902–925 (QNIRSLNLSSNRLTGSIPDSISKL), 927–949 (GLESLDLSNNKLDGSIPPALADL), and 951–970 (SLGYLNISYNNLSGEIPFKG). N460 and N498 each carry an N-linked (GlcNAc...) asparagine glycan. An N-linked (GlcNAc...) asparagine glycan is attached at N553. N-linked (GlcNAc...) asparagine glycans are attached at residues N618, N631, and N645. N-linked (GlcNAc...) asparagine glycans are attached at residues N749 and N771. An N-linked (GlcNAc...) asparagine glycan is attached at N908. N-linked (GlcNAc...) asparagine glycosylation is found at N956 and N961. Residues 971–1024 (HLVTFDERSYIGNAHLCGLPTNKNCISQRVPEPPSVSTHAKEEENEEEGNVIDM) are C-cap/acidic domain. The chain crosses the membrane as a helical span at residues 1025–1045 (VWFYWTCAAVYISTSLALFAF). The Cytoplasmic portion of the chain corresponds to 1046-1077 (LYIDSRWSREWFYRVDLCVHHILQFKRSSVCN).

This sequence belongs to the RLP family.

It localises to the cell membrane. Its function is as follows. Involved in plant defense. Confers resistance to the bacterial pathogen Xanthomonas through recognition of the microbe-associated molecular pattern (MAMP) eMax. Functionality seems to depend on the presence of the receptor kinase SOBIR1 as an adapter protein. The chain is Receptor-like protein 1 from Arabidopsis thaliana (Mouse-ear cress).